The sequence spans 161 residues: 6,7-dimethyl-8-ribityllumazine synthase (161 aa).

5-amino-6-(D-ribitylamino)uracil-binding positions include W31, 65 to 67, and 89 to 91; these read TFE and CVV. (2S)-2-hydroxy-3-oxobutyl phosphate is bound at residue 94-95; the sequence is DT. H97 serves as the catalytic Proton donor. Residue F122 coordinates 5-amino-6-(D-ribitylamino)uracil. R136 is a binding site for (2S)-2-hydroxy-3-oxobutyl phosphate.

The protein belongs to the DMRL synthase family.

The catalysed reaction is (2S)-2-hydroxy-3-oxobutyl phosphate + 5-amino-6-(D-ribitylamino)uracil = 6,7-dimethyl-8-(1-D-ribityl)lumazine + phosphate + 2 H2O + H(+). Its pathway is cofactor biosynthesis; riboflavin biosynthesis; riboflavin from 2-hydroxy-3-oxobutyl phosphate and 5-amino-6-(D-ribitylamino)uracil: step 1/2. Its function is as follows. Catalyzes the formation of 6,7-dimethyl-8-ribityllumazine by condensation of 5-amino-6-(D-ribitylamino)uracil with 3,4-dihydroxy-2-butanone 4-phosphate. This is the penultimate step in the biosynthesis of riboflavin. This is 6,7-dimethyl-8-ribityllumazine synthase from Porphyromonas gingivalis (strain ATCC 33277 / DSM 20709 / CIP 103683 / JCM 12257 / NCTC 11834 / 2561).